The primary structure comprises 246 residues: 2-aminoethylphosphonate cytidylyltransferase (246 aa).

6 residues coordinate CMP-(2-aminoethyl)phosphonate: Ala19, Gly20, Lys34, Ser97, Glu114, and Ala115. Positions 116 and 145 each coordinate Mg(2+). The CMP-(2-aminoethyl)phosphonate site is built by Asp145, Lys161, and Asp202. Mg(2+) contacts are provided by Glu226 and Asp228.

It belongs to the LicC/PntC cytidylyltransferase family. As to quaternary structure, monomer. Mg(2+) is required as a cofactor.

The catalysed reaction is (2-aminoethyl)phosphonate + CTP = CMP-(2-aminoethyl)phosphonate + diphosphate. It participates in phosphorus metabolism; phosphonate biosynthesis. Its function is as follows. Cytidylyltransferase involved in the biosynthesis of cell-surface phosphonates. Catalyzes the activation of 2-aminoethylphosphonate (AEP) to CMP-2-aminoethylphosphonate (CMP-AEP). Can also use phosphocholine, with much lower efficiency. Exhibits strong activity towards CTP, limited activity towards ATP and no activity with GTP. The protein is 2-aminoethylphosphonate cytidylyltransferase of Lancefieldella rimae (strain ATCC 49626 / DSM 7090 / CCUG 31168 / NBRC 15546 / VPI D140H-11A) (Atopobium rimae).